A 105-amino-acid polypeptide reads, in one-letter code: Heat shock protein HspQ (105 aa).

The segment at Ser74–Asn105 is disordered.

It belongs to the HspQ family.

The protein localises to the cytoplasm. Functionally, involved in the degradation of certain denaturated proteins, including DnaA, during heat shock stress. This Citrobacter koseri (strain ATCC BAA-895 / CDC 4225-83 / SGSC4696) protein is Heat shock protein HspQ.